Reading from the N-terminus, the 229-residue chain is Clathrin light chain (229 aa).

Disordered regions lie at residues 1-24 and 76-132; these read MSQF…DSKN and EMQA…KLRE. The segment covering 107–132 has biased composition (basic and acidic residues); sequence EPVRKWKEDQMKRIQERDESSKKLRE. Phosphoserine is present on Ser229.

This sequence belongs to the clathrin light chain family. As to quaternary structure, clathrin coats are formed from molecules containing 3 heavy chains and 3 light chains.

Its subcellular location is the cytoplasmic vesicle membrane. It is found in the membrane. It localises to the coated pit. Its function is as follows. Clathrin is the major protein of the polyhedral coat of coated pits and vesicles. This is Clathrin light chain (clc1) from Schizosaccharomyces pombe (strain 972 / ATCC 24843) (Fission yeast).